The primary structure comprises 140 residues: Callisulfakinin (140 aa).

The first 30 residues, 1-30, serve as a signal peptide directing secretion; it reads MYSQQRIFNSKYFIFFIAVLSIFWLPTMSA. Positions 31–109 are excised as a propeptide; it reads RNLENSKNEN…LEYEDEDRSK (79 aa). Position 114 is a sulfotyrosine (tyrosine 114). Phenylalanine 119 carries the phenylalanine amide modification. The residue at position 131 (tyrosine 131) is a Sulfotyrosine. Phenylalanine 136 carries the post-translational modification Phenylalanine amide. Residues 139–140 constitute a propeptide that is removed on maturation; sequence SI.

The protein belongs to the gastrin/cholecystokinin family. As to expression, in brain, it is specifically expressed in four pairs of neurons. Not expressed in other cells of the brain and in the thoracico-abdominal ganglion.

It localises to the secreted. Functionally, callisulfakinin I is a neuropeptide. The existence of Callisulfakinin II is uncertain. This is Callisulfakinin from Calliphora vomitoria (Blue bottle fly).